A 95-amino-acid chain; its full sequence is Aspartyl/glutamyl-tRNA(Asn/Gln) amidotransferase subunit C (95 aa).

It belongs to the GatC family. Heterotrimer of A, B and C subunits.

It carries out the reaction L-glutamyl-tRNA(Gln) + L-glutamine + ATP + H2O = L-glutaminyl-tRNA(Gln) + L-glutamate + ADP + phosphate + H(+). The catalysed reaction is L-aspartyl-tRNA(Asn) + L-glutamine + ATP + H2O = L-asparaginyl-tRNA(Asn) + L-glutamate + ADP + phosphate + 2 H(+). Allows the formation of correctly charged Asn-tRNA(Asn) or Gln-tRNA(Gln) through the transamidation of misacylated Asp-tRNA(Asn) or Glu-tRNA(Gln) in organisms which lack either or both of asparaginyl-tRNA or glutaminyl-tRNA synthetases. The reaction takes place in the presence of glutamine and ATP through an activated phospho-Asp-tRNA(Asn) or phospho-Glu-tRNA(Gln). The polypeptide is Aspartyl/glutamyl-tRNA(Asn/Gln) amidotransferase subunit C (Brucella abortus (strain S19)).